The following is a 593-amino-acid chain: Tectonic-1 (593 aa).

The N-terminal stretch at 1–22 (MGSRGLPPLLLVLLNCYTSSST) is a signal peptide. Positions 37–72 (KEDLNSTKATPTTLQPSLSPRTPGTPRAPERSGPRP) are disordered. Asparagine 41 carries N-linked (GlcNAc...) asparagine glycosylation. The span at 42–58 (STKATPTTLQPSLSPRT) shows a compositional bias: polar residues. Asparagine 303 is a glycosylation site (N-linked (GlcNAc...) asparagine). Position 486 is an omega-N-methylarginine (arginine 486). Asparagine 536 is a glycosylation site (N-linked (GlcNAc...) asparagine).

It belongs to the tectonic family. As to quaternary structure, part of the tectonic-like complex (also named B9 complex).

Its subcellular location is the cytoplasm. It is found in the cytoskeleton. It localises to the cilium basal body. The protein localises to the secreted. Component of the tectonic-like complex, a complex localized at the transition zone of primary cilia and acting as a barrier that prevents diffusion of transmembrane proteins between the cilia and plasma membranes. Regulator of Hedgehog (Hh), required for both activation and inhibition of the Hh pathway in the patterning of the neural tube. During neural tube development, it is required for formation of the most ventral cell types and for full Hh pathway activation. Functions in Hh signal transduction to fully activate the pathway in the presence of high Hh levels and to repress the pathway in the absence of Hh signals. Modulates Hh signal transduction downstream of SMO and RAB23. In Mus musculus (Mouse), this protein is Tectonic-1 (Tctn1).